A 519-amino-acid chain; its full sequence is 6-phosphofructo-2-kinase/fructose-2,6-bisphosphatase 2 (519 aa).

A compositionally biased stretch (polar residues) spans M1–Y17. The tract at residues M1–S22 is disordered. S2 carries the N-acetylserine modification. Residues S2–H251 form a 6-phosphofructo-2-kinase region. S32 bears the Phosphoserine; by PKA mark. G48–Y56 lines the ATP pocket. Beta-D-fructose 6-phosphate is bound by residues R81 and R105. D131 is an active-site residue. 2 residues coordinate beta-D-fructose 6-phosphate: T133 and R139. C161 is an active-site residue. Residue N170–K175 participates in ATP binding. 3 residues coordinate beta-D-fructose 6-phosphate: K175, R196, and Y200. A fructose-2,6-bisphosphatase region spans residues P252–V519. R259 contributes to the beta-D-fructose 2,6-bisphosphate binding site. Residue H260 is the Tele-phosphohistidine intermediate of the active site. Beta-D-fructose 2,6-bisphosphate-binding residues include N266 and G272. E329 functions as the Proton donor/acceptor in the catalytic mechanism. Positions 340, 354, 358, 369, 395, and 399 each coordinate beta-D-fructose 2,6-bisphosphate. F351–R354 contributes to the ATP binding site. ATP-binding positions include Q395–R399 and Y431. The segment at H448 to K493 is disordered. Positions F456–I479 are enriched in polar residues. Residue S469 is modified to Phosphoserine. A Phosphothreonine modification is found at T471. T478 carries the post-translational modification Phosphothreonine; by PKC. S486 and S496 each carry phosphoserine. The tract at residues A500–V519 is disordered. Residues P510 to V519 show a composition bias toward polar residues.

The protein in the C-terminal section; belongs to the phosphoglycerate mutase family. In terms of assembly, homodimer. Forms a heterodimer with PFKFB3. Phosphorylation by AMPK stimulates activity. In terms of tissue distribution, highest levels in kidney; also found in heart, brain, spleen, lung, liver, skeletal muscle and testis.

It carries out the reaction beta-D-fructose 2,6-bisphosphate + H2O = beta-D-fructose 6-phosphate + phosphate. The catalysed reaction is beta-D-fructose 6-phosphate + ATP = beta-D-fructose 2,6-bisphosphate + ADP + H(+). Its activity is regulated as follows. Phosphorylation results in the activation of the kinase activity. Functionally, synthesis and degradation of fructose 2,6-bisphosphate. The protein is 6-phosphofructo-2-kinase/fructose-2,6-bisphosphatase 2 (Pfkfb2) of Mus musculus (Mouse).